The sequence spans 275 residues: Gap junction gamma-3 protein (275 aa).

The Cytoplasmic segment spans residues methionine 1–arginine 22. The helical transmembrane segment at leucine 23 to valine 43 threads the bilayer. Over phenylalanine 44–arginine 77 the chain is Extracellular. Residues phenylalanine 78 to leucine 98 form a helical membrane-spanning segment. Over tyrosine 99–arginine 134 the chain is Cytoplasmic. The helical transmembrane segment at leucine 135–glycine 155 threads the bilayer. At glycine 156–threonine 196 the chain is on the extracellular side. A helical membrane pass occupies residues methionine 197–leucine 217. Residues glycine 218–proline 275 lie on the Cytoplasmic side of the membrane. Residues glutamate 254 to serine 267 show a composition bias toward basic and acidic residues. Positions glutamate 254–proline 275 are disordered.

This sequence belongs to the connexin family. Gamma-type subfamily. A connexon is composed of a hexamer of connexins.

It is found in the cell membrane. Its subcellular location is the cell junction. It localises to the gap junction. Functionally, one gap junction consists of a cluster of closely packed pairs of transmembrane channels, the connexons, through which materials of low MW diffuse from one cell to a neighboring cell. The sequence is that of Gap junction gamma-3 protein (GJC3) from Bos taurus (Bovine).